The following is a 900-amino-acid chain: MGTLLLEVTMLKNKFFPLLILVSVLLSLISYLLNLYSDWLFFDETGFSSVFTTTLYAKTGAGLLFGGLLFLFVQINLHVANRAQFPLSGMHLLGAGNLGINRDQAVRLCKPVSMLVSFVLALLAGNLGAMKWKDLLFFANRLTVGTVDPLIGKDVGFYLFSLPLLDAVKGVSGFIILAAAALATAVYYVRGGILLTERGVAIDEKVRRHLAVLVGIFACAVAAGFYLDSFKLLYADNGAFYGAGYVDVNSRLLTYRVLTFLTPLAGAMLAIGIWKGVWRMALLAPAIVVALYMLGIRVYPGVLQKFKVAPNEMALETPYIMNNITATRFGYDLEKIETVPFDVDTKLTAADIANNDATIKNIRLWDHAPLLKTYSQLQQIRTYYKFFDVDNDRYMVNGRYSQVMLSPRELSYADLPSKNWINERLIFTHGNGITFGPVSRISKEGLPEFFVKDIPAVSLADIKVSRPEIYYGELSNEYVIVKTNVPEFSYPTATGNITTTYAGTGGVPMDSLLKKALFAAKFRTEKILLSSDITKESRILYNRNINERIRTIAPFLHFDSDPYLVVDQKGRLKWIIDAYTHSTRLPYSRPLKGGINYIRNSVKTVVDAYDGSVDFYISDPDDVILKVHGRIFPKLFKPMAEMPGDLRKHVRYPHHLLQIQAAMFATYHMTDPKVFYNKENLWEIPVLGDKAMEPYYTIMKLPGEKAEEYILLLPFTPSKRDNLAAWLTARCDEPQYGKIRAYTFPRDRLIYGPKQIDARINQDSFISQQLTLWSQRGSEAIRGSLLVIPIEKSLLYVQPLFLAADKAGLPELKRVIVAFGDQLVMEENLELALQRIFGGKKAAPAATSGVSADTQASPATLAKEAVSIYEKAITLQRQGNWAAYGEELRSLEQILKKMAR.

Helical transmembrane passes span 15–35, 60–80, 112–132, 174–194, 210–230, 257–277, and 282–302; these read FFPL…LLNL, GAGL…LHVA, VSML…AMKW, FIIL…GGIL, LAVL…LDSF, VLTF…WKGV, and LLAP…YPGV.

The protein belongs to the UPF0182 family.

It is found in the cell membrane. The polypeptide is UPF0182 protein Ppro_3567 (Pelobacter propionicus (strain DSM 2379 / NBRC 103807 / OttBd1)).